The sequence spans 142 residues: Transcriptional regulator MraZ (142 aa).

SpoVT-AbrB domains follow at residues 5 to 51 (ASAL…PRPE) and 77 to 120 (AMDV…DSQT).

It belongs to the MraZ family. In terms of assembly, forms oligomers.

It localises to the cytoplasm. It is found in the nucleoid. The polypeptide is Transcriptional regulator MraZ (Burkholderia multivorans (strain ATCC 17616 / 249)).